Consider the following 940-residue polypeptide: Insulin receptor substrate 1 (940 aa).

The 102-residue stretch at 8 to 109 (GMVLSGYHKK…WLDKLLLLQR (102 aa)) folds into the PH domain. An IRS-type PTB domain is found at 122–236 (YEHVWQVIIQ…SAMSAKTDSN (115 aa)). 3 positions are modified to phosphoserine: Ser284, Ser285, and Ser340. Phosphotyrosine; by INSR is present on Tyr407. The YXXM motif 1 signature appears at 407–410 (YIPM). Polar residues predominate over residues 523-540 (NRSQNNISKEGPISGTST). The disordered stretch occupies residues 523–549 (NRSQNNISKEGPISGTSTNREKKSTSA). Ser548 bears the Phosphoserine mark. Residues 639–642 (YLEM) carry the YXXM motif 2 motif. Tyr883 is subject to Phosphotyrosine; by INSR. Positions 895–915 (NPAKYLKRGSRESPPVATCAE) are disordered. Phosphoserine occurs at positions 904 and 907. Position 920 is a phosphotyrosine; by INSR (Tyr920).

In terms of assembly, bindings to phosphatidylinositol 3-kinase and SHP2.

Functionally, activates phosphatidylinositol 3-kinase when bound to the regulatory p85 subunit. May mediate the control of various cellular processes by insulin-like peptides. When phosphorylated by the insulin receptor binds specifically to various cellular proteins containing SH2 domains. Involved in control of cell proliferation, cell size, and body and organ growth throughout development. Also has a role in a signaling pathway controlling the physiological response required to endure periods of low nutrient conditions. Insulin/insulin-like growth factor (IGF) signaling pathway has a role in regulating aging and is necessary in the ovary for vitellogenic maturation. The sequence is that of Insulin receptor substrate 1 from Drosophila ananassae (Fruit fly).